The following is a 380-amino-acid chain: Cytochrome b (380 aa).

4 consecutive transmembrane segments (helical) span residues 34-54 (FGSLLAMCLATQILTGLLLAM), 78-99 (WLIRNLHANGASFFFICIFLHI), 114-134 (WNTGVILLLTLMATAFVGYVL), and 179-199 (FFALHFLLPFVIAGITIIHLI). Residues H84 and H98 each contribute to the heme b site. Residues H183 and H197 each coordinate heme b. H202 provides a ligand contact to a ubiquinone. Helical transmembrane passes span 227–247 (LKDILGLTLMLTPLLTLALFS), 289–309 (LGGVLALAASVLILLLIPFLH), 321–341 (LSQTLFWLLVANLLVLTWVGS), and 348–368 (FIIIGQMASFSYFTILLILFP).

It belongs to the cytochrome b family. In terms of assembly, the cytochrome bc1 complex contains 11 subunits: 3 respiratory subunits (MT-CYB, CYC1 and UQCRFS1), 2 core proteins (UQCRC1 and UQCRC2) and 6 low-molecular weight proteins (UQCRH/QCR6, UQCRB/QCR7, UQCRQ/QCR8, UQCR10/QCR9, UQCR11/QCR10 and a cleavage product of UQCRFS1). This cytochrome bc1 complex then forms a dimer. Heme b is required as a cofactor.

It is found in the mitochondrion inner membrane. Component of the ubiquinol-cytochrome c reductase complex (complex III or cytochrome b-c1 complex) that is part of the mitochondrial respiratory chain. The b-c1 complex mediates electron transfer from ubiquinol to cytochrome c. Contributes to the generation of a proton gradient across the mitochondrial membrane that is then used for ATP synthesis. In Tragopan temminckii (Temminck's tragopan), this protein is Cytochrome b (MT-CYB).